Here is a 352-residue protein sequence, read N- to C-terminus: Selenide, water dikinase (352 aa).

C23 is a catalytic residue. Residues K26 and 54 to 56 (SRD) contribute to the ATP site. D57 contributes to the Mg(2+) binding site. ATP-binding positions include D74, D97, and 145-147 (GHS). Position 97 (D97) interacts with Mg(2+). D233 serves as a coordination point for Mg(2+).

It belongs to the selenophosphate synthase 1 family. Class I subfamily. As to quaternary structure, homodimer. Mg(2+) is required as a cofactor.

It carries out the reaction hydrogenselenide + ATP + H2O = selenophosphate + AMP + phosphate + 2 H(+). Synthesizes selenophosphate from selenide and ATP. The sequence is that of Selenide, water dikinase from Shewanella putrefaciens (strain CN-32 / ATCC BAA-453).